The following is a 144-amino-acid chain: Superoxide dismutase [Mn], mitochondrial (144 aa).

Mn(2+) is bound by residues histidine 10, histidine 58, and aspartate 143.

It belongs to the iron/manganese superoxide dismutase family. Homotetramer. Mn(2+) serves as cofactor.

The protein localises to the mitochondrion matrix. It carries out the reaction 2 superoxide + 2 H(+) = H2O2 + O2. Its function is as follows. Destroys superoxide anion radicals which are normally produced within the cells and which are toxic to biological systems. The protein is Superoxide dismutase [Mn], mitochondrial of Branchiostoma floridae (Florida lancelet).